The primary structure comprises 219 residues: Ras-related protein Rab-3D (219 aa).

Alanine 2 bears the N-acetylalanine mark. GDP is bound at residue 29–37; sequence GNSSVGKTS. Serine 31, serine 32, valine 33, glycine 34, lysine 35, threonine 36, serine 37, proline 49, and serine 53 together coordinate GTP. Threonine 36 contacts Mg(2+). The short motif at 49–58 is the Switch 1 element; it reads PAFVSTVGID. Residues threonine 54 and aspartate 77 each coordinate Mg(2+). A GTP-binding site is contributed by glycine 80. Residues 80 to 96 carry the Switch 2 motif; the sequence is GQERYRTITTAYYRGAM. Threonine 86 carries the phosphothreonine; by LRRK2 modification. Asparagine 135, lysine 136, aspartate 138, alanine 166, and lysine 167 together coordinate GTP. Residues 135-138 and 165-167 contribute to the GDP site; these read NKCD and SAK. Serine 190 is subject to Phosphoserine. A disordered region spans residues 190–219; the sequence is SLEPSSSPGSNGKGPALGDTPPPQPSSCSC. Residues 193 to 203 are compositionally biased toward low complexity; the sequence is PSSSPGSNGKG. The segment covering 209 to 219 has biased composition (pro residues); that stretch reads TPPPQPSSCSC. S-geranylgeranyl cysteine attachment occurs at residues cysteine 217 and cysteine 219. Cysteine 219 bears the Cysteine methyl ester mark.

This sequence belongs to the small GTPase superfamily. Rab family. As to quaternary structure, interacts with RIMS1, RIMS2, RPH3A, RPH3AL and RAB3IP. The GTP-bound form interacts with REP15. Interacts with CHM and CHML; phosphorylation at Thr-86 disrupts these interactions. Interacts with MADD (via uDENN domain); the GTP-bound form is preferred for interaction. Requires Mg(2+) as cofactor. In terms of processing, phosphorylation of Thr-86 in the switch II region by LRRK2 prevents the association of RAB regulatory proteins, including CHM and CHML. Predominantly expressed in the adipocyte tissue, but is also expressed in several other organs including skin, spleen, heart and lung.

It localises to the cell membrane. The enzyme catalyses GTP + H2O = GDP + phosphate + H(+). Its activity is regulated as follows. Regulated by guanine nucleotide exchange factors (GEFs) which promote the exchange of bound GDP for free GTP. Regulated by GTPase activating proteins (GAPs) which increase the GTP hydrolysis activity. Inhibited by GDP dissociation inhibitors (GDIs) which prevent Rab-GDP dissociation. Functionally, the small GTPases Rab are key regulators of intracellular membrane trafficking, from the formation of transport vesicles to their fusion with membranes. Rabs cycle between an inactive GDP-bound form and an active GTP-bound form that is able to recruit to membranes different sets of downstream effectors directly responsible for vesicle formation, movement, tethering and fusion. RAB3D may be involved in the insulin-induced exocytosis of GLUT4-containing vesicles in adipocytes. The protein is Ras-related protein Rab-3D of Mus musculus (Mouse).